Consider the following 204-residue polypeptide: Peptidyl-tRNA hydrolase 2 (204 aa).

Tyr-37 is a binding site for tRNA. The active-site Proton acceptor is the His-42. The tRNA site is built by Phe-86, Asn-88, and Asn-134.

It belongs to the PTH family. As to quaternary structure, monomer.

It localises to the cytoplasm. The catalysed reaction is an N-acyl-L-alpha-aminoacyl-tRNA + H2O = an N-acyl-L-amino acid + a tRNA + H(+). Functionally, hydrolyzes ribosome-free peptidyl-tRNAs (with 1 or more amino acids incorporated), which drop off the ribosome during protein synthesis, or as a result of ribosome stalling. Catalyzes the release of premature peptidyl moieties from peptidyl-tRNA molecules trapped in stalled 50S ribosomal subunits, and thus maintains levels of free tRNAs and 50S ribosomes. The protein is Peptidyl-tRNA hydrolase 2 of Corynebacterium glutamicum (strain ATCC 13032 / DSM 20300 / JCM 1318 / BCRC 11384 / CCUG 27702 / LMG 3730 / NBRC 12168 / NCIMB 10025 / NRRL B-2784 / 534).